Here is a 179-residue protein sequence, read N- to C-terminus: MANVANKYAKALFDVAIDKDRLDLMYDELSEVSEATKNYGEDLRAIDSNPNQPASERRKFVGIVFGDANYYLKNMLMILANNRHLVLINSIFKEFKSLYNEYHNEDSAIVESVYQLSDEELDRIKDLILKQTNLSQVHITTKINPELIGGFRVKVGTTVLDGSVKKDLEQIERKFRRVN.

The protein belongs to the ATPase delta chain family. F-type ATPases have 2 components, F(1) - the catalytic core - and F(0) - the membrane proton channel. F(1) has five subunits: alpha(3), beta(3), gamma(1), delta(1), epsilon(1). F(0) has three main subunits: a(1), b(2) and c(10-14). The alpha and beta chains form an alternating ring which encloses part of the gamma chain. F(1) is attached to F(0) by a central stalk formed by the gamma and epsilon chains, while a peripheral stalk is formed by the delta and b chains.

It is found in the cell membrane. In terms of biological role, f(1)F(0) ATP synthase produces ATP from ADP in the presence of a proton or sodium gradient. F-type ATPases consist of two structural domains, F(1) containing the extramembraneous catalytic core and F(0) containing the membrane proton channel, linked together by a central stalk and a peripheral stalk. During catalysis, ATP synthesis in the catalytic domain of F(1) is coupled via a rotary mechanism of the central stalk subunits to proton translocation. This protein is part of the stalk that links CF(0) to CF(1). It either transmits conformational changes from CF(0) to CF(1) or is implicated in proton conduction. This Staphylococcus haemolyticus (strain JCSC1435) protein is ATP synthase subunit delta.